The following is a 698-amino-acid chain: Serine/alanine racemase (698 aa).

Over 1-10 (MKNKGIDQFR) the chain is Cytoplasmic. Residues 11-31 (VIAAMMVVAIHCLPLHYLWPE) form a helical membrane-spanning segment. Topologically, residues 32-42 (GDILITLTIFR) are extracellular. Residues 43–63 (VAVPFFFMISGYYVFAELAVA) form a helical membrane-spanning segment. At 64-81 (NSYPSRQRVFNFIKKQLK) the chain is on the cytoplasmic side. The chain crosses the membrane as a helical span at residues 82–102 (VYLLATLMFLPLALYSQTIGF). The Extracellular portion of the chain corresponds to 103-121 (DLPVGTLVQVLLVNGILYH). Residues 122–142 (LWYFPALITGSLLLTSLLIHV) form a helical membrane-spanning segment. Over 143–147 (SFKKV) the chain is Cytoplasmic. A helical transmembrane segment spans residues 148-168 (FWLAAGLYLIGLGGDSWFGLI). Residues 169-183 (QQTPIEPFYTAVFHL) lie on the Extracellular side of the membrane. The chain crosses the membrane as a helical span at residues 184-204 (LDGTRNGIFFTPLFLCLGVLV). The Cytoplasmic segment spans residues 205 to 216 (RKQSEKRSLSKT). A helical transmembrane segment spans residues 217–237 (ALFFLISLIGLLIESAYLHGF). The Extracellular portion of the chain corresponds to 238–244 (SIPKHDS). The chain crosses the membrane as a helical span at residues 245-265 (MYLFLPVVLFFLFPLILRWHP). Residues 266 to 274 (HRTWKHPGQ) lie on the Cytoplasmic side of the membrane. A helical transmembrane segment spans residues 275–295 (LSLWLYLLHPYTIAGTHFLSQ). Over 296 to 301 (KISILQ) the chain is Extracellular. The helical transmembrane segment at 302 to 322 (NNLINYLVVLILTIGFICLFL) threads the bilayer. Residues 323-698 (RQKHSWFRHK…IGPRVSARIK (376 aa)) are Cytoplasmic-facing. The segment at 332–698 (KQTTPVKRAV…IGPRVSARIK (367 aa)) is racemase. The Proton acceptor role is filled by lysine 371. N6-(pyridoxal phosphate)lysine is present on lysine 371. Residue arginine 465 participates in substrate binding. Tyrosine 597 (proton acceptor) is an active-site residue. Methionine 646 is a binding site for substrate.

In the N-terminal section; belongs to the acyltransferase 3 family. This sequence in the C-terminal section; belongs to the alanine racemase family. Homodimer. Pyridoxal 5'-phosphate is required as a cofactor.

The protein resides in the cell membrane. The enzyme catalyses L-alanine = D-alanine. The catalysed reaction is L-serine = D-serine. Its pathway is amino-acid biosynthesis; D-alanine biosynthesis; D-alanine from L-alanine: step 1/1. Its function is as follows. Catalyzes the interconversion of L-serine and D-serine, and L-alanine and D-alanine. L-alanine is racemized at a rate that is 14% of that of L-serine. Together with VanC/VanC1 and VanXYC, required for vancomycin resistance in E.gallinarum strain BM4174. The polypeptide is Serine/alanine racemase (Enterococcus gallinarum).